The primary structure comprises 121 residues: Large ribosomal subunit protein bL12 (121 aa).

This sequence belongs to the bacterial ribosomal protein bL12 family. Homodimer. Part of the ribosomal stalk of the 50S ribosomal subunit. Forms a multimeric L10(L12)X complex, where L10 forms an elongated spine to which 2 to 4 L12 dimers bind in a sequential fashion. Binds GTP-bound translation factors.

In terms of biological role, forms part of the ribosomal stalk which helps the ribosome interact with GTP-bound translation factors. Is thus essential for accurate translation. The sequence is that of Large ribosomal subunit protein bL12 from Xanthomonas axonopodis pv. citri (strain 306).